The sequence spans 186 residues: NADH-dependent FMN reductase SfnE (186 aa).

This sequence belongs to the SsuE family.

It catalyses the reaction FMNH2 + NAD(+) = FMN + NADH + 2 H(+). In terms of biological role, involved in the dimethyl sulfide degradation pathway. Catalyzes the NADH-dependent reduction of FMN. The protein is NADH-dependent FMN reductase SfnE of Pseudomonas putida (Arthrobacter siderocapsulatus).